Reading from the N-terminus, the 757-residue chain is RNA-directed RNA polymerase catalytic subunit (757 aa).

The segment at 52–82 (KGKWTTNTETGAPQLNPIDGPLPEDNEPSGY) is disordered. Residues 55–64 (WTTNTETGAP) show a composition bias toward polar residues. 2 consecutive short sequence motifs (nuclear localization signal) follow at residues 187-195 (RKRRVRDNM) and 203-216 (RTIG…NKKS). The tract at residues 249 to 256 (RGFVYFVE) is promoter-binding site. The region spanning 286-483 (VRKMMTNSQD…GINMSKKKSY (198 aa)) is the RdRp catalytic domain.

The protein belongs to the influenza viruses polymerase PB1 family. As to quaternary structure, influenza RNA polymerase is composed of three subunits: PB1, PB2 and PA. Interacts (via N-terminus) with PA (via C-terminus). Interacts (via C-terminus) with PB2 (via N-terminus); this interaction is essential for transcription initiation. Post-translationally, phosphorylated by host PRKCA.

It localises to the host nucleus. The protein localises to the host cytoplasm. The catalysed reaction is RNA(n) + a ribonucleoside 5'-triphosphate = RNA(n+1) + diphosphate. Functionally, RNA-dependent RNA polymerase which is responsible for replication and transcription of virus RNA segments. The transcription of viral mRNAs occurs by a unique mechanism called cap-snatching. 5' methylated caps of cellular mRNAs are cleaved after 10-13 nucleotides by PA. In turn, these short capped RNAs are used as primers by PB1 for transcription of viral mRNAs. During virus replication, PB1 initiates RNA synthesis and copy vRNA into complementary RNA (cRNA) which in turn serves as a template for the production of more vRNAs. The sequence is that of RNA-directed RNA polymerase catalytic subunit from Influenza A virus (strain A/Chicken/Shantou/4231/2003 H5N1 genotype V).